A 118-amino-acid polypeptide reads, in one-letter code: MAFKSDVIFEEIKERIATDKEMVKKVGTSFRMTIAGADGKTKVWTIDAKSDTPYVGDDSSRPVEIEINIKDSDFIAIAAGKMKPDQAFMQGKMKLKGNIAKAMKLRTILDPKMLKAKL.

Residues 5-113 form the SCP2 domain; that stretch reads SDVIFEEIKE…KLRTILDPKM (109 aa).

This chain is Non-specific lipid-transfer protein-like 1 (nlt-1), found in Caenorhabditis elegans.